A 220-amino-acid chain; its full sequence is MKKEKAVVVFSGGQDSTTCLFWAIEQFAEVEAVTFNYNQRHKLEIDCAVEIAKELGIKHTVLDMSLLNQLAPNALTRTDMEITHEEGELPSTFVDGRNLLFLSFAAVLAKQVGARHIVTGVCETDFSGYPDCRDVFVKSLNVTLNLSMDYPFVIHTPLMWIDKAETWKLSDELGAFEFVREKTLTCYNGIIGDGCGECPACQLRKAGLDTYLQEREGASN.

ATP is bound at residue 10 to 20 (FSGGQDSTTCL). Residues cysteine 186, cysteine 195, cysteine 198, and cysteine 201 each contribute to the Zn(2+) site.

The protein belongs to the QueC family. As to quaternary structure, homodimer. The cofactor is Zn(2+).

The catalysed reaction is 7-carboxy-7-deazaguanine + NH4(+) + ATP = 7-cyano-7-deazaguanine + ADP + phosphate + H2O + H(+). Its pathway is purine metabolism; 7-cyano-7-deazaguanine biosynthesis. Functionally, catalyzes the ATP-dependent conversion of 7-carboxy-7-deazaguanine (CDG) to 7-cyano-7-deazaguanine (preQ(0)). The chain is 7-cyano-7-deazaguanine synthase from Bacillus anthracis (strain A0248).